Consider the following 886-residue polypeptide: MEAALLVCQYTIQSLIQLTRDDPGFFNVEILEFPFYPACNVCTADVNATINFDVGGKKHKLNLDFGLLTPHTKAVYQPRGAFGGSENATNLFLLELLGAGELALTMRSKKLPINITTGEEQQVSLESVDVYFQDVFGTMWCHHAEMQNPVYLIPETVPYIKWDNCNSTNITAVVRAQGLDVTLPLSLPTSAQDSNFSVKTEMLGNEIDIECIMEDGEISQVLPGDNKFNITCSGYESHVPSGGILTSTSPVATPIPGTGYAYSLRLTPRPVSRFLGNNSILYVFYSGNGPKASGGDYCIQSNIVFSDEIPASQDMPTNTTDITYVGDNATYSVPMVTSEDANSPNVTVTAFWAWPNNTETDFKCKWTLTSGTPSGCENISGAFASNRTFDITVSGLGTAPKTLIITRTATNATTTTHKVIFSKAPESTTTSPTLNTTGFAAPNTTTGLPSSTHVPTNLTAPASTGPTVSTADVTSPTPAGTTSGASPVTPSPSPRDNGTESKAPDMTSPTSAVTTPTPNATSPTPAVTTPTPNATSPTLGKTSPTSAVTTPTPNATSPTPAVTTPTPNATIPTLGKTSPTSAVTTPTPNATSPTVGETSPQANTTNHTLGGTSSTPVVTSPPKNATSAVTTGQHNITSSSTSSMSLRPSSISETLSPSTSDNSTSHMPLLTSAHPTGGENITQVTPASTSTHHVSTSSPAPRPGTTSQASGPGNSSTSTKPGEVNVTKGTPPKNATSPQAPSGQKTAVPTVTSTGGKANSTTGGKHTTGHGARTSTEPTTDYGGDSTTPRTRYNATTYLPPSTSSKLRPRWTFTSPPVTTAQATVPVPPTSQPRFSNLSMLVLQWASLAVLTLLLLLVMADCAFRRNLSTSHTYTTPPYDDAETYV.

Residues 1 to 839 are Virion surface-facing; the sequence is MEAALLVCQY…TSQPRFSNLS (839 aa). N-linked (GlcNAc...) asparagine; by host glycosylation is found at Asn-47, Asn-87, Asn-114, Asn-166, Asn-169, Asn-195, Asn-229, Asn-277, Asn-318, Asn-328, Asn-345, Asn-356, Asn-378, Asn-386, Asn-411, Asn-435, Asn-443, Asn-457, Asn-497, Asn-519, Asn-533, Asn-554, Asn-568, Asn-589, Asn-603, Asn-606, Asn-624, and Asn-635. A disordered region spans residues 423–810; sequence KAPESTTTSP…PSTSSKLRPR (388 aa). Low complexity predominate over residues 428-437; that stretch reads TTTSPTLNTT. Polar residues predominate over residues 442-488; the sequence is PNTTTGLPSSTHVPTNLTAPASTGPTVSTADVTSPTPAGTTSGASPV. Positions 507–595 are enriched in low complexity; sequence TSPTSAVTTP…PTPNATSPTV (89 aa). Residues 596 to 637 show a composition bias toward polar residues; that stretch reads GETSPQANTTNHTLGGTSSTPVVTSPPKNATSAVTTGQHNIT. Over residues 638-660 the composition is skewed to low complexity; that stretch reads SSSTSSMSLRPSSISETLSPSTS. N-linked (GlcNAc...) asparagine; by host glycosylation is found at Asn-662 and Asn-680. The span at 684-699 shows a compositional bias: low complexity; it reads VTPASTSTHHVSTSSP. A compositionally biased stretch (polar residues) spans 704–720; that stretch reads GTTSQASGPGNSSTSTK. Residues Asn-714, Asn-725, Asn-734, and Asn-759 are each glycosylated (N-linked (GlcNAc...) asparagine; by host). Polar residues predominate over residues 733–760; sequence KNATSPQAPSGQKTAVPTVTSTGGKANS. Positions 761 to 771 are enriched in low complexity; that stretch reads TTGGKHTTGHG. A compositionally biased stretch (polar residues) spans 773-806; that stretch reads RTSTEPTTDYGGDSTTPRTRYNATTYLPPSTSSK. Asn-794 and Asn-837 each carry an N-linked (GlcNAc...) asparagine; by host glycan. A helical transmembrane segment spans residues 840-860; that stretch reads MLVLQWASLAVLTLLLLLVMA. The Intravirion segment spans residues 861 to 886; it reads DCAFRRNLSTSHTYTTPPYDDAETYV.

It belongs to the Epstein-Barr GP350 family. As to quaternary structure, interacts with host CR2. In terms of processing, extensively glycosylated.

It is found in the virion membrane. The protein localises to the host membrane. Initiates virion attachment to host B-lymphocyte cell, leading to virus entry. Acts by binding to host CR2 at the surface of B-lymphocytes, facilitating the binding of viral glycoprotein gp42 to HLA class II molecules. Attachment triggers virion-host membrane fusion and invasion of the host cell. This is Envelope glycoprotein GP350 from Homo sapiens (Human).